Consider the following 1606-residue polypeptide: Fatty acid synthase apf5 (1606 aa).

The Carrier domain maps to 142–218 (VPVSAILISL…ETLSTSHDGQ (77 aa)). S177 bears the O-(pantetheine 4'-phosphoryl)serine mark. A Ketosynthase family 3 (KS3) domain is found at 996 to 1539 (KESLIEVALQ…QKGGQALLVH (544 aa)). Active-site for beta-ketoacyl synthase activity residues include C1182, H1424, and H1465.

Belongs to the thiolase-like superfamily. Fungal fatty acid synthetase subunit alpha family.

The enzyme catalyses a fatty acyl-[ACP] + malonyl-[ACP] + H(+) = a 3-oxoacyl-[ACP] + holo-[ACP] + CO2. Its pathway is secondary metabolite biosynthesis. Functionally, fatty acid synthase; part of the gene cluster that mediates the biosynthesis of the cyclic tetrapeptide apicidin F (APF). The non-ribosomal peptide synthetase apf1 incorporates four different amino acids to produce apicidin F: L-phenylalanine, D-pipecolic acid (D-pip), N-methoxy-L-tryptophan and L-2-aminooctanedioic acid. L-Phenylalanine is the only proteinogenic amino acid directly used by apf1. The 3 other apf1 substrates are non-proteinogenic and have to be modified by other enzymes of the cluster. Lysine is converted to delta-1-pyrroline-5-carboxylate (P5C) which is reduced to L-pipecolic acid (L-pip) by apf3. L-pip is epimerized to D-pip, probably by apf1 activity, prior to incorporation. L-Tryptophan is N-oxidyzed by one of the cytochrome P450 monooxygenases (apf7 or apf8), and further methylated at the hydroxy group by the O-methyltransferase apf6 to yield N-methoxy-L-tryptophan. The synthesis of the fourth apf1 substrate is more complex. The fatty acid synthase apf5 is involved in the synthesis of the octanoic acid backbone of L-2-aminooctanedioic acid by fixing one acetyl-CoA unit and three malonyl-CoA units. Then one of the cytochrome P450 monooxygenases (apf7 or apf8) may oxidize this backbone to 2-oxooctanoic acid. The aminotransferase apf4 is predicted to catalyze the exchange of the keto group with an amino group. The next step would be the oxidation of 2-aminooctanoic acid by one of the cytochrome P450 monooxygenases (apf7 or apf8). The last step is the oxidation of 2-amino-8-hydroxyoctanoic acid to 2-aminooctanedioic acid is catalyzed by the FAD-dependent monooxygenase apf9. In Gibberella fujikuroi (strain CBS 195.34 / IMI 58289 / NRRL A-6831) (Bakanae and foot rot disease fungus), this protein is Fatty acid synthase apf5.